A 433-amino-acid chain; its full sequence is Amino-acid acetyltransferase (433 aa).

One can recognise an N-acetyltransferase domain in the interval 287–426 (ELVREAAIED…ASLYNYQRNS (140 aa)).

The protein belongs to the acetyltransferase family. ArgA subfamily.

The protein resides in the cytoplasm. The catalysed reaction is L-glutamate + acetyl-CoA = N-acetyl-L-glutamate + CoA + H(+). Its pathway is amino-acid biosynthesis; L-arginine biosynthesis; N(2)-acetyl-L-ornithine from L-glutamate: step 1/4. The polypeptide is Amino-acid acetyltransferase (Pseudomonas fluorescens (strain SBW25)).